The following is a 250-amino-acid chain: MSSNISIVAIIPARYASTRFPGKPLIQINGKTMIQCVYDQVRSTPEITEVLVATDDDRIEAEVLRFGGKVVRTLPEHPSGTDRCFEAYQKLNKPFDFIINVQGDEPFIQPEQIRTLAGILTPDVELATLIKKIEDEETLFNPNTPKVLVNANGEAIYFSRQTIPYLRQHADKKDWLANHTFFKHIGMYAYRPDILAQITQLKPSALELAESLEQLRWLESGYSIHTAVTTIETVGIDTPEDLLRVTHTSS.

It belongs to the KdsB family.

The protein resides in the cytoplasm. The catalysed reaction is 3-deoxy-alpha-D-manno-oct-2-ulosonate + CTP = CMP-3-deoxy-beta-D-manno-octulosonate + diphosphate. It participates in nucleotide-sugar biosynthesis; CMP-3-deoxy-D-manno-octulosonate biosynthesis; CMP-3-deoxy-D-manno-octulosonate from 3-deoxy-D-manno-octulosonate and CTP: step 1/1. Its pathway is bacterial outer membrane biogenesis; lipopolysaccharide biosynthesis. Activates KDO (a required 8-carbon sugar) for incorporation into bacterial lipopolysaccharide in Gram-negative bacteria. The sequence is that of 3-deoxy-manno-octulosonate cytidylyltransferase from Cytophaga hutchinsonii (strain ATCC 33406 / DSM 1761 / CIP 103989 / NBRC 15051 / NCIMB 9469 / D465).